A 359-amino-acid chain; its full sequence is 3-dehydroquinate synthase (359 aa).

NAD(+) is bound by residues 72-77, 106-110, 130-131, lysine 143, lysine 152, and 170-173; these read EGEIHK, GVIGD, TS, and CLKT. 3 residues coordinate Zn(2+): glutamate 185, histidine 248, and histidine 264.

It belongs to the sugar phosphate cyclases superfamily. Dehydroquinate synthase family. It depends on Co(2+) as a cofactor. Zn(2+) serves as cofactor. NAD(+) is required as a cofactor.

It localises to the cytoplasm. The enzyme catalyses 7-phospho-2-dehydro-3-deoxy-D-arabino-heptonate = 3-dehydroquinate + phosphate. The protein operates within metabolic intermediate biosynthesis; chorismate biosynthesis; chorismate from D-erythrose 4-phosphate and phosphoenolpyruvate: step 2/7. Catalyzes the conversion of 3-deoxy-D-arabino-heptulosonate 7-phosphate (DAHP) to dehydroquinate (DHQ). The chain is 3-dehydroquinate synthase from Dehalococcoides mccartyi (strain CBDB1).